The primary structure comprises 314 residues: tRNA dimethylallyltransferase (314 aa).

Residue Gly9–Thr16 participates in ATP binding. Thr11–Thr16 serves as a coordination point for substrate. An interaction with substrate tRNA region spans residues Asp34–Gln37.

It belongs to the IPP transferase family. Monomer. The cofactor is Mg(2+).

It carries out the reaction adenosine(37) in tRNA + dimethylallyl diphosphate = N(6)-dimethylallyladenosine(37) in tRNA + diphosphate. In terms of biological role, catalyzes the transfer of a dimethylallyl group onto the adenine at position 37 in tRNAs that read codons beginning with uridine, leading to the formation of N6-(dimethylallyl)adenosine (i(6)A). The polypeptide is tRNA dimethylallyltransferase (Desulfitobacterium hafniense (strain DSM 10664 / DCB-2)).